Reading from the N-terminus, the 427-residue chain is Adenylosuccinate synthetase (427 aa).

GTP is bound by residues 12-18 (GDEGKGK) and 40-42 (GHT). The active-site Proton acceptor is the D13. The Mg(2+) site is built by D13 and G40. Residues 13 to 16 (DEGK), 38 to 41 (NAGH), T128, R142, Q223, T238, and R302 contribute to the IMP site. Residue H41 is the Proton donor of the active site. A substrate-binding site is contributed by 298-304 (TTTGRPR). Residues R304, 330–332 (KLD), and 412–414 (AVG) contribute to the GTP site.

Belongs to the adenylosuccinate synthetase family. As to quaternary structure, homodimer. Requires Mg(2+) as cofactor.

The protein localises to the cytoplasm. It catalyses the reaction IMP + L-aspartate + GTP = N(6)-(1,2-dicarboxyethyl)-AMP + GDP + phosphate + 2 H(+). Its pathway is purine metabolism; AMP biosynthesis via de novo pathway; AMP from IMP: step 1/2. In terms of biological role, plays an important role in the de novo pathway of purine nucleotide biosynthesis. Catalyzes the first committed step in the biosynthesis of AMP from IMP. This is Adenylosuccinate synthetase from Heliobacterium modesticaldum (strain ATCC 51547 / Ice1).